The primary structure comprises 513 residues: Zinc finger CCCH-type with G patch domain-containing protein (513 aa).

The C3H1-type zinc finger occupies 155–178 (PCSYYLEGECRFDETKCRFSHGAL). Composition is skewed to acidic residues over residues 252-261 (DQDEDDELSS) and 271-283 (DSSDEAESDMDDL). Residues 252 to 283 (DQDEDDELSSEESNSSMNDDSSDEAESDMDDL) are disordered. Positions 312–358 (TRGIGSKLMEKMGYIHGTGLGSDGRGIVTPVSAQILPQGRSLDACME) constitute a G-patch domain. The span at 455-467 (DMAKVKQSLDRNS) shows a compositional bias: basic and acidic residues. The disordered stretch occupies residues 455–513 (DMAKVKQSLDRNSGDAQLQKRLQVQMESHKQELATLQAQERSLSKEQQTRKSKNKMFEF). The segment covering 468-480 (GDAQLQKRLQVQM) has biased composition (polar residues). Residues 496-513 (SLSKEQQTRKSKNKMFEF) are compositionally biased toward basic and acidic residues.

The protein resides in the nucleus. Its function is as follows. Transcription repressor. This is Zinc finger CCCH-type with G patch domain-containing protein from Drosophila yakuba (Fruit fly).